A 467-amino-acid polypeptide reads, in one-letter code: Ribosomal protein uS12 methylthiotransferase RimO (467 aa).

The 110-residue stretch at 1–110 folds into the MTTase N-terminal domain; the sequence is MDLHGCAKNQ…LPQLIDSMFP (110 aa). The [4Fe-4S] cluster site is built by Cys6, Cys42, Cys73, Cys153, Cys157, and Cys160. In terms of domain architecture, Radical SAM core spans 139-386; the sequence is LNFPRSTYIK…QNAQTSITEK (248 aa). In terms of domain architecture, TRAM spans 389–467; it reads DSFIGKEIEV…NGFDLEAVAV (79 aa).

The protein belongs to the methylthiotransferase family. RimO subfamily. [4Fe-4S] cluster is required as a cofactor.

Its subcellular location is the cytoplasm. The catalysed reaction is L-aspartate(89)-[ribosomal protein uS12]-hydrogen + (sulfur carrier)-SH + AH2 + 2 S-adenosyl-L-methionine = 3-methylsulfanyl-L-aspartate(89)-[ribosomal protein uS12]-hydrogen + (sulfur carrier)-H + 5'-deoxyadenosine + L-methionine + A + S-adenosyl-L-homocysteine + 2 H(+). Catalyzes the methylthiolation of an aspartic acid residue of ribosomal protein uS12. This Treponema denticola (strain ATCC 35405 / DSM 14222 / CIP 103919 / JCM 8153 / KCTC 15104) protein is Ribosomal protein uS12 methylthiotransferase RimO.